The chain runs to 312 residues: Aspartate carbamoyltransferase catalytic subunit (312 aa).

The carbamoyl phosphate site is built by Arg-58 and Thr-59. Lys-86 is an L-aspartate binding site. The carbamoyl phosphate site is built by Arg-108, His-136, and Gln-139. L-aspartate-binding residues include Arg-169 and Arg-223. Residues Gly-264 and Pro-265 each contribute to the carbamoyl phosphate site.

This sequence belongs to the aspartate/ornithine carbamoyltransferase superfamily. ATCase family. As to quaternary structure, heterododecamer (2C3:3R2) of six catalytic PyrB chains organized as two trimers (C3), and six regulatory PyrI chains organized as three dimers (R2).

It carries out the reaction carbamoyl phosphate + L-aspartate = N-carbamoyl-L-aspartate + phosphate + H(+). It functions in the pathway pyrimidine metabolism; UMP biosynthesis via de novo pathway; (S)-dihydroorotate from bicarbonate: step 2/3. Catalyzes the condensation of carbamoyl phosphate and aspartate to form carbamoyl aspartate and inorganic phosphate, the committed step in the de novo pyrimidine nucleotide biosynthesis pathway. The sequence is that of Aspartate carbamoyltransferase catalytic subunit from Desulfitobacterium hafniense (strain DSM 10664 / DCB-2).